Here is a 325-residue protein sequence, read N- to C-terminus: Elongation factor P--(R)-beta-lysine ligase (325 aa).

76–78 (SPE) contacts substrate. ATP-binding positions include 100-102 (RNE) and Asn-109. Substrate is bound at residue Tyr-118. An ATP-binding site is contributed by 244-245 (EL). Residue Glu-251 participates in substrate binding. Gly-300 is an ATP binding site.

The protein belongs to the class-II aminoacyl-tRNA synthetase family. EpmA subfamily. In terms of assembly, homodimer.

The enzyme catalyses D-beta-lysine + L-lysyl-[protein] + ATP = N(6)-((3R)-3,6-diaminohexanoyl)-L-lysyl-[protein] + AMP + diphosphate + H(+). With EpmB is involved in the beta-lysylation step of the post-translational modification of translation elongation factor P (EF-P). Catalyzes the ATP-dependent activation of (R)-beta-lysine produced by EpmB, forming a lysyl-adenylate, from which the beta-lysyl moiety is then transferred to the epsilon-amino group of a conserved specific lysine residue in EF-P. This chain is Elongation factor P--(R)-beta-lysine ligase, found in Pectobacterium atrosepticum (strain SCRI 1043 / ATCC BAA-672) (Erwinia carotovora subsp. atroseptica).